We begin with the raw amino-acid sequence, 473 residues long: Ribulose bisphosphate carboxylase large chain (473 aa).

The propeptide occupies 1-2; that stretch reads MS. At Pro3 the chain carries N-acetylproline. Lys14 bears the N6,N6,N6-trimethyllysine mark. Residues Asn123 and Thr173 each contribute to the substrate site. Lys175 (proton acceptor) is an active-site residue. Lys177 provides a ligand contact to substrate. The Mg(2+) site is built by Lys201, Asp203, and Glu204. Lys201 is modified (N6-carboxylysine). His294 functions as the Proton acceptor in the catalytic mechanism. The substrate site is built by Arg295, His327, and Ser379.

The protein belongs to the RuBisCO large chain family. Type I subfamily. In terms of assembly, heterohexadecamer of 8 large chains and 8 small chains; disulfide-linked. The disulfide link is formed within the large subunit homodimers. It depends on Mg(2+) as a cofactor. Post-translationally, the disulfide bond which can form in the large chain dimeric partners within the hexadecamer appears to be associated with oxidative stress and protein turnover.

The protein localises to the plastid. It localises to the chloroplast. It carries out the reaction 2 (2R)-3-phosphoglycerate + 2 H(+) = D-ribulose 1,5-bisphosphate + CO2 + H2O. The catalysed reaction is D-ribulose 1,5-bisphosphate + O2 = 2-phosphoglycolate + (2R)-3-phosphoglycerate + 2 H(+). In terms of biological role, ruBisCO catalyzes two reactions: the carboxylation of D-ribulose 1,5-bisphosphate, the primary event in carbon dioxide fixation, as well as the oxidative fragmentation of the pentose substrate in the photorespiration process. Both reactions occur simultaneously and in competition at the same active site. This is Ribulose bisphosphate carboxylase large chain from Cajanus cajan (Pigeon pea).